The following is a 405-amino-acid chain: Interferon alpha/beta receptor 1a (405 aa).

The N-terminal stretch at methionine 1–alanine 20 is a signal peptide. Residues glutamate 21–glutamine 233 are Extracellular-facing. 2 consecutive Fibronectin type-III domains span residues leucine 22 to serine 123 and proline 126 to aspartate 228. N-linked (GlcNAc...) asparagine glycans are attached at residues asparagine 27 and asparagine 70. 2 cysteine pairs are disulfide-bonded: cysteine 75/cysteine 83 and cysteine 201/cysteine 222. N-linked (GlcNAc...) asparagine glycosylation is present at asparagine 212. A helical membrane pass occupies residues isoleucine 234–tyrosine 254. The Cytoplasmic portion of the chain corresponds to alanine 255 to valine 405. A disordered region spans residues threonine 325 to serine 374. Residues aspartate 334 to serine 343 show a composition bias toward basic and acidic residues. Residues isoleucine 348–glycine 359 are compositionally biased toward polar residues.

The protein belongs to the type II cytokine receptor family. In terms of assembly, heterodimer with IFNAR2; forming the receptor for type I interferon.

The protein resides in the cell membrane. Together with IFNAR2, forms the heterodimeric receptor for type I interferons (including interferons alpha, beta, epsilon, omega and kappa). Type I interferon binding activates the JAK-STAT signaling cascade, resulting in transcriptional activation or repression of interferon-regulated genes that encode the effectors of the interferon response. Mechanistically, type I interferon-binding brings the IFNAR1 and IFNAR2 subunits into close proximity with one another, driving their associated Janus kinases (JAKs) (TYK2 bound to IFNAR1 and JAK1 bound to IFNAR2) to cross-phosphorylate one another. The activated kinases phosphorylate specific tyrosine residues on the intracellular domains of IFNAR1 and IFNAR2, forming docking sites for the STAT transcription factors. STAT proteins are then phosphorylated by the JAKs, promoting their translocation into the nucleus to regulate expression of interferon-regulated genes. This is Interferon alpha/beta receptor 1a from Oncorhynchus mykiss (Rainbow trout).